Here is a 367-residue protein sequence, read N- to C-terminus: MFNVRQLIATTLLLSCAFAAQAERLKDIASISGVRSNQLIGYGLVVGLNGTGDQTTQTPFTLQTFNNMLSQFGIKVPAGSGNVQLKNVAAVSVHADLPPFAKPGQVVDITVSSIGNSKSLRGGSLLMTPLKGIDGNVYAIAQGNLVVGGFDAQGRDGSKITVNVPSAGRIPGGASVERAVPSGFNQGNTLTLNLNRPDFTTAKRIVDKVNDLLGPGVAQAVHGGSVRVSAPMDPSQRVDYLSILENLEIDPGQAVAKVIINSRTGTIVIGQNVKVSPAVTHGSLTVTITEDPIVSQPGAFSNGQTAVVPRSRVNAEQEAKPMFKFGPGTTLDEIVRAVNQVGAAPGNLMAILEALKHRPLQADLIVI.

The signal sequence occupies residues 1 to 22 (MFNVRQLIATTLLLSCAFAAQA).

This sequence belongs to the FlgI family. In terms of assembly, the basal body constitutes a major portion of the flagellar organelle and consists of four rings (L,P,S, and M) mounted on a central rod.

The protein resides in the periplasm. Its subcellular location is the bacterial flagellum basal body. In terms of biological role, assembles around the rod to form the L-ring and probably protects the motor/basal body from shearing forces during rotation. The chain is Flagellar P-ring protein (flgI) from Pseudomonas putida (Arthrobacter siderocapsulatus).